We begin with the raw amino-acid sequence, 501 residues long: Glutamyl-tRNA(Gln) amidotransferase subunit A (501 aa).

Residues K84 and S159 each act as charge relay system in the active site. Residue S183 is the Acyl-ester intermediate of the active site.

This sequence belongs to the amidase family. GatA subfamily. As to quaternary structure, heterotrimer of A, B and C subunits.

It catalyses the reaction L-glutamyl-tRNA(Gln) + L-glutamine + ATP + H2O = L-glutaminyl-tRNA(Gln) + L-glutamate + ADP + phosphate + H(+). Allows the formation of correctly charged Gln-tRNA(Gln) through the transamidation of misacylated Glu-tRNA(Gln) in organisms which lack glutaminyl-tRNA synthetase. The reaction takes place in the presence of glutamine and ATP through an activated gamma-phospho-Glu-tRNA(Gln). The chain is Glutamyl-tRNA(Gln) amidotransferase subunit A from Streptomyces avermitilis (strain ATCC 31267 / DSM 46492 / JCM 5070 / NBRC 14893 / NCIMB 12804 / NRRL 8165 / MA-4680).